We begin with the raw amino-acid sequence, 190 residues long: UPF0316 protein Mboo_0605 (190 aa).

Transmembrane regions (helical) follow at residues 3–23, 41–61, and 67–87; these read IGTFWSVAAIPLLILVARIAE, LAAYVGIVKTGIWLISTGLVL, and FWNLFAYLAGYGMGTVLGMEI.

Belongs to the UPF0316 family.

The protein localises to the cell membrane. This is UPF0316 protein Mboo_0605 from Methanoregula boonei (strain DSM 21154 / JCM 14090 / 6A8).